Reading from the N-terminus, the 602-residue chain is MDHIRNFSIIAHIDHGKSTLADRIIQRCGGLSDREMEAQVLDSMDIERERGITIKAQTAALQYKARDGQVYNLNLIDTPGHVDFSYEVSRSLSACEGALLVVDASQGVEAQTVANCYTALDLGVTVVPVLNKMDLPNADPDNAKAEIEDVIGIDADDAIPCSAKTGMGIDEILEAVIARMPPPKGNPDGPPRAMIVDSWFDNYVGVVMLVRVVDGTLGKGERIRMMATNSVYPIEHLGVFTPKSENREALKAGEVGFIICGIKELQAAKVGDTVTLEKKLPNNAGPAAEALPGFKEIQPQVFAGLYPTEASEYDQLRDALEKLKLNDSSLRYEPEVSQALGFGFRCGFLGLLHMEIVQERLEREFDQDLITTAPSVVYEVQLNGGDVIEVENPSKMPEVGKIAEIREPIVTVHLYMPQDYVGPVMTLANQKRGVQLNMAYHGRQVMLTYEMPLAEIVLDFFDKLKSVSRGYASMDYEFKEYRASDVVKVDILINGDRVDALSIIVHRAQSQYRGRAVAAKMREQIPRQMYDVAIQAAIGANIIARENIKALRKNVLAKCYGGDISRKRKLLEKQKAGKKRMKQIGSVEVPQEAFLAILQVED.

Positions 2–184 constitute a tr-type G domain; the sequence is DHIRNFSIIA…AVIARMPPPK (183 aa). GTP contacts are provided by residues 14–19 and 131–134; these read DHGKST and NKMD.

The protein belongs to the TRAFAC class translation factor GTPase superfamily. Classic translation factor GTPase family. LepA subfamily.

Its subcellular location is the cell inner membrane. It carries out the reaction GTP + H2O = GDP + phosphate + H(+). Required for accurate and efficient protein synthesis under certain stress conditions. May act as a fidelity factor of the translation reaction, by catalyzing a one-codon backward translocation of tRNAs on improperly translocated ribosomes. Back-translocation proceeds from a post-translocation (POST) complex to a pre-translocation (PRE) complex, thus giving elongation factor G a second chance to translocate the tRNAs correctly. Binds to ribosomes in a GTP-dependent manner. The chain is Elongation factor 4 from Leptothrix cholodnii (strain ATCC 51168 / LMG 8142 / SP-6) (Leptothrix discophora (strain SP-6)).